Consider the following 310-residue polypeptide: GTPase Era (310 aa).

The Era-type G domain occupies 17–184; sequence HSGFVALIGA…LDYLAQALPA (168 aa). The interval 25–32 is G1; sequence GAPNAGKS. GTP is bound at residue 25 to 32; that stretch reads GAPNAGKS. The tract at residues 51–55 is G2; the sequence is QTTRA. The interval 72–75 is G3; sequence DTPG. GTP-binding positions include 72 to 76 and 134 to 137; these read DTPGI and NKVD. Positions 134–137 are G4; sequence NKVD. The segment at 163 to 165 is G5; that stretch reads VSA. In terms of domain architecture, KH type-2 spans 215–292; that stretch reads LHQELPYSSH…HLFLFVKVRE (78 aa).

It belongs to the TRAFAC class TrmE-Era-EngA-EngB-Septin-like GTPase superfamily. Era GTPase family. In terms of assembly, monomer.

The protein localises to the cytoplasm. The protein resides in the cell inner membrane. In terms of biological role, an essential GTPase that binds both GDP and GTP, with rapid nucleotide exchange. Plays a role in 16S rRNA processing and 30S ribosomal subunit biogenesis and possibly also in cell cycle regulation and energy metabolism. The protein is GTPase Era of Mesorhizobium japonicum (strain LMG 29417 / CECT 9101 / MAFF 303099) (Mesorhizobium loti (strain MAFF 303099)).